We begin with the raw amino-acid sequence, 1113 residues long: Sterol regulatory element binding protein sbp-1 (1113 aa).

The interval 1–52 is transcriptional activation (acidic); the sequence is MNEEFEGDVPMSDPFLSLVTKLDDIAPFPNNDPLDFDMEHNWQEPGPSQQPD. Disordered stretches follow at residues 24–68, 101–132, 206–274, and 290–345; these read DIAP…EYYD, LGGG…TSPP, SPYD…SPQN, and EVER…SQGT. Positions 229-238 are enriched in basic residues; the sequence is PHHHHHHPMP. Positions 324–337 are enriched in acidic residues; that stretch reads AEGDEDEDDEDSDS. Positions 355–368 are basic motif; sequence ERRTAHNLIEKKYR. In terms of domain architecture, bHLH spans 355-405; it reads ERRTAHNLIEKKYRCSINDRIQQLKVLLCGDEAKLSKSATLRRAIEHIEEV. Residues 369 to 405 are helix-loop-helix motif; it reads CSINDRIQQLKVLLCGDEAKLSKSATLRRAIEHIEEV. Residues 395 to 422 adopt a coiled-coil conformation; sequence LRRAIEHIEEVEHENQVLKHHVEQMRKT. Positions 437–472 are disordered; it reads TEYSARSPVESSPSPPRNERKRSRMSTTTPMKNGTR. 2 consecutive transmembrane segments (helical) span residues 478–498 and 541–561; these read VTLF…LLAG and MSYV…KLLI.

In terms of processing, processed in the Golgi apparatus, releasing the protein from the membrane. Ubiquitinated; the nuclear form has a rapid turnover and is rapidly ubiquitinated and degraded by the proteasome in the nucleus. Broadly expressed, including many cells in the head. Expressed in the intestine.

Its subcellular location is the nucleus. The protein localises to the endoplasmic reticulum membrane. Functionally, transcription factor involved in maintaining normal fat levels. Regulates the expression of genes involved in lipid metabolism in response to nutrient availability, such as the fatty-acid desaturases fat-5, fat-6 and fat-7. In response to a high-glucose diet, promotes fatty acid synthesis, elongation and desaturation, acting in concert with transcription factor mxl-3. Plays a role in synthesis of monomethyl branched-chain fatty acids (mmBCFAs) as well as other very-long-chain fatty acids. Downstream of the cis-Golgi membrane protein eas-1/GOLT1B and the E3 ubiquitin ligase rnf-145/RNF145, plays a role in the regulation of glial size, perhaps by modulating synthesis of long-chain polyunsaturated fatty-acids (LC-PUFA). Modulates expression of genes in the one-carbon cycle, which produces the methyl donor S-adenosylmethionine (SAM). Probably involved in a feedback loop in which decreased levels of SAM lead to increased transcriptional activity of sbp-1, thereby causing lipid accumulation. Involved in the negative regulation of zinc homeostasis. Involved in the response to simulated microgravity, in concert with Mediator complex subunit mdt-15, probably acting in the intestine. Plays a role in transgenerational lipid accumulation in response to a high-fat diet, probably acting by upregulating wdr-5.1 expression to increase the level of trimethylated 'Lys-4' histone H3 (H3K4me3), which may then induce the expression of fat-5, fat-6 and fat-7. May act as an oxygen sensor for lipid metabolism. Its function is as follows. Precursor of the transcription factor form, which is embedded in the endoplasmic reticulum membrane. Processing of this form allows release of the transcription factor form that translocates into the nucleus and activates transcription of genes involved in sterol biosynthesis and lipid homeostasis. Key transcription factor that regulates expression of genes involved in sterol biosynthesis and lipid homeostasis. This is Sterol regulatory element binding protein sbp-1 from Caenorhabditis elegans.